Here is a 146-residue protein sequence, read N- to C-terminus: Leptin (146 aa).

A disulfide bridge links cysteine 96 with cysteine 146.

The protein belongs to the leptin family.

Its subcellular location is the secreted. In terms of biological role, key player in the regulation of energy balance and body weight control. Once released into the circulation, has central and peripheral effects by binding LEPR, found in many tissues, which results in the activation of several major signaling pathways. In the hypothalamus, acts as an appetite-regulating factor that induces a decrease in food intake and an increase in energy consumption by inducing anorexinogenic factors and suppressing orexigenic neuropeptides, also regulates bone mass and secretion of hypothalamo-pituitary-adrenal hormones. In the periphery, increases basal metabolism, influences reproductive function, regulates pancreatic beta-cell function and insulin secretion, is pro-angiogenic for endothelial cell and affects innate and adaptive immunity. In the arcuate nucleus of the hypothalamus, activates by depolarization POMC neurons inducing FOS and SOCS3 expression to release anorexigenic peptides and inhibits by hyperpolarization NPY neurons inducing SOCS3 with a consequent reduction on release of orexigenic peptides. In addition to its known satiety inducing effect, has a modulatory role in nutrient absorption. In the intestine, reduces glucose absorption by enterocytes by activating PKC and leading to a sequential activation of p38, PI3K and ERK signaling pathways which exerts an inhibitory effect on glucose absorption. Acts as a growth factor on certain tissues, through the activation of different signaling pathways increases expression of genes involved in cell cycle regulation such as CCND1, via JAK2-STAT3 pathway, or VEGFA, via MAPK1/3 and PI3K-AKT1 pathways. May also play an apoptotic role via JAK2-STAT3 pathway and up-regulation of BIRC5 expression. Pro-angiogenic, has mitogenic activity on vascular endothelial cells and plays a role in matrix remodeling by regulating the expression of matrix metalloproteinases (MMPs) and tissue inhibitors of metalloproteinases (TIMPs). In innate immunity, modulates the activity and function of neutrophils by increasing chemotaxis and the secretion of oxygen radicals. Increases phagocytosis by macrophages and enhances secretion of pro-inflammatory mediators. Increases cytotoxic ability of NK cells. Plays a pro-inflammatory role, in synergy with IL1B, by inducing NOS2 which promotes the production of IL6, IL8 and Prostaglandin E2, through a signaling pathway that involves JAK2, PI3K, MAP2K1/MEK1 and MAPK14/p38. In adaptive immunity, promotes the switch of memory T-cells towards T helper-1 cell immune responses. Increases CD4(+)CD25(-) T-cell proliferation and reduces autophagy during TCR (T-cell receptor) stimulation, through MTOR signaling pathway activation and BCL2 up-regulation. The polypeptide is Leptin (LEP) (Ovis aries (Sheep)).